We begin with the raw amino-acid sequence, 521 residues long: 2-isopropylmalate synthase (521 aa).

Residues valine 12–threonine 274 form the Pyruvate carboxyltransferase domain. The Mn(2+) site is built by aspartate 21, histidine 209, histidine 211, and asparagine 245. The segment at lysine 398 to serine 521 is regulatory domain.

Belongs to the alpha-IPM synthase/homocitrate synthase family. LeuA type 1 subfamily. As to quaternary structure, homodimer. Mn(2+) is required as a cofactor.

The protein resides in the cytoplasm. It carries out the reaction 3-methyl-2-oxobutanoate + acetyl-CoA + H2O = (2S)-2-isopropylmalate + CoA + H(+). It functions in the pathway amino-acid biosynthesis; L-leucine biosynthesis; L-leucine from 3-methyl-2-oxobutanoate: step 1/4. Its function is as follows. Catalyzes the condensation of the acetyl group of acetyl-CoA with 3-methyl-2-oxobutanoate (2-ketoisovalerate) to form 3-carboxy-3-hydroxy-4-methylpentanoate (2-isopropylmalate). The chain is 2-isopropylmalate synthase from Rhodopseudomonas palustris (strain BisA53).